A 34-amino-acid chain; its full sequence is Photosystem II reaction center protein M (34 aa).

Residues 5 to 25 form a helical membrane-spanning segment; it reads ILAFIATVLFILVPTAFLLII.

Belongs to the PsbM family. As to quaternary structure, PSII is composed of 1 copy each of membrane proteins PsbA, PsbB, PsbC, PsbD, PsbE, PsbF, PsbH, PsbI, PsbJ, PsbK, PsbL, PsbM, PsbT, PsbX, PsbY, PsbZ, Psb30/Ycf12, at least 3 peripheral proteins of the oxygen-evolving complex and a large number of cofactors. It forms dimeric complexes.

It is found in the plastid. The protein localises to the chloroplast thylakoid membrane. Functionally, one of the components of the core complex of photosystem II (PSII). PSII is a light-driven water:plastoquinone oxidoreductase that uses light energy to abstract electrons from H(2)O, generating O(2) and a proton gradient subsequently used for ATP formation. It consists of a core antenna complex that captures photons, and an electron transfer chain that converts photonic excitation into a charge separation. This subunit is found at the monomer-monomer interface. The polypeptide is Photosystem II reaction center protein M (Piper cenocladum (Ant piper)).